A 145-amino-acid polypeptide reads, in one-letter code: D-aminoacyl-tRNA deacylase (145 aa).

The short motif at 137-138 is the Gly-cisPro motif, important for rejection of L-amino acids element; sequence GP.

Belongs to the DTD family. As to quaternary structure, homodimer.

It is found in the cytoplasm. The enzyme catalyses glycyl-tRNA(Ala) + H2O = tRNA(Ala) + glycine + H(+). The catalysed reaction is a D-aminoacyl-tRNA + H2O = a tRNA + a D-alpha-amino acid + H(+). An aminoacyl-tRNA editing enzyme that deacylates mischarged D-aminoacyl-tRNAs. Also deacylates mischarged glycyl-tRNA(Ala), protecting cells against glycine mischarging by AlaRS. Acts via tRNA-based rather than protein-based catalysis; rejects L-amino acids rather than detecting D-amino acids in the active site. By recycling D-aminoacyl-tRNA to D-amino acids and free tRNA molecules, this enzyme counteracts the toxicity associated with the formation of D-aminoacyl-tRNA entities in vivo and helps enforce protein L-homochirality. This Francisella tularensis subsp. holarctica (strain FTNF002-00 / FTA) protein is D-aminoacyl-tRNA deacylase.